Consider the following 265-residue polypeptide: Interleukin-1 alpha (265 aa).

A propeptide spanning residues 1–108 (MAKVPDLFED…DTEEVIMKPR (108 aa)) is cleaved from the precursor. N6-acetyllysine is present on Lys78. The interval 78-82 (KKRRL) is nuclear localization signal (NLS). The residue at position 83 (Ser83) is a Phosphoserine. 2 N-linked (GlcNAc...) asparagine glycosylation sites follow: Asn98 and Asn137.

This sequence belongs to the IL-1 family. In terms of assembly, monomer. Interacts with TMED10; the interaction mediates the translocation from the cytoplasm into the ERGIC (endoplasmic reticulum-Golgi intermediate compartment) and thereby secretion. Interacts with IL1R1. Interacts with S100A13; this interaction is the first step in the export of IL1A, followed by direct translocation of this complex across the plasma membrane. In terms of processing, acetylated within its nuclear localization sequence, which impacts subcellular localization. Proteolytic processed by CAPN1 in a calcium-dependent manner. Cleavage from 31 kDa precursor to 18 kDa biologically active molecules. Post-translationally, phosphorylated. Phosphorylation greatly enhances susceptibility to digestion and promotes the conversion of pre-IL1A alpha to the biologically active IL1A.

The protein resides in the nucleus. Its subcellular location is the cytoplasm. It is found in the secreted. Functionally, cytokine constitutively present intracellularly in nearly all resting non-hematopoietic cells that plays an important role in inflammation and bridges the innate and adaptive immune systems. After binding to its receptor IL1R1 together with its accessory protein IL1RAP, forms the high affinity interleukin-1 receptor complex. Signaling involves the recruitment of adapter molecules such as MYD88, IRAK1 or IRAK4. In turn, mediates the activation of NF-kappa-B and the three MAPK pathways p38, p42/p44 and JNK pathways. Within the cell, acts as an alarmin and cell death results in its liberation in the extracellular space after disruption of the cell membrane to induce inflammation and alert the host to injury or damage. In addition to its role as a danger signal, which occurs when the cytokine is passively released by cell necrosis, directly senses DNA damage and acts as signal for genotoxic stress without loss of cell integrity. In Canis lupus familiaris (Dog), this protein is Interleukin-1 alpha (IL1A).